We begin with the raw amino-acid sequence, 76 residues long: Omega-scoloptoxin(15)-Ssd3c (76 aa).

A signal peptide spans 1–23 (MEKKIIFLVVLVALLALPEFISS).

The protein belongs to the scoloptoxin-15 family. Contains 2 disulfide bonds. As to expression, expressed by the venom gland.

It is found in the secreted. Its function is as follows. Voltage-gated calcium channel inhibitor (Cav) (8.6% block at 10 nM), when tested on DRG neurons. The sequence is that of Omega-scoloptoxin(15)-Ssd3c from Scolopendra dehaani (Thai centipede).